The sequence spans 334 residues: uncharacterized protein (334 aa).

It belongs to the MG414/MG415 family.

This is an uncharacterized protein from Mycoplasma pneumoniae (strain ATCC 29342 / M129 / Subtype 1) (Mycoplasmoides pneumoniae).